The primary structure comprises 162 residues: Lipoprotein signal peptidase (162 aa).

The next 4 membrane-spanning stretches (helical) occupy residues 9–29 (LCLV…LVAT), 39–59 (VIHG…FGLF), 66–86 (VRKF…LWLY), and 95–115 (VLSF…IDRF). Residues Asp122 and Asp140 contribute to the active site. Residues 136–156 (FNVADSAITIGMVVFVYHVIF) traverse the membrane as a helical segment.

It belongs to the peptidase A8 family.

The protein resides in the cell inner membrane. It carries out the reaction Release of signal peptides from bacterial membrane prolipoproteins. Hydrolyzes -Xaa-Yaa-Zaa-|-(S,diacylglyceryl)Cys-, in which Xaa is hydrophobic (preferably Leu), and Yaa (Ala or Ser) and Zaa (Gly or Ala) have small, neutral side chains.. It participates in protein modification; lipoprotein biosynthesis (signal peptide cleavage). Functionally, this protein specifically catalyzes the removal of signal peptides from prolipoproteins. The sequence is that of Lipoprotein signal peptidase from Desulforapulum autotrophicum (strain ATCC 43914 / DSM 3382 / VKM B-1955 / HRM2) (Desulfobacterium autotrophicum).